The primary structure comprises 239 residues: MVKQRKTKYTSLPLSSLFEDASLSTKSPKREPSQEKEIKKEEIIKKNKPCKYEEECKRSDCVFLHPGEKMPEKPKPKETERRKTRMCKYVKKCNKGKNCPFAHDESEIYIPECRYGYKCKKQGKDNEPGECKFSHPPPPPPSPPSPPPKEEIKEEIFEFEITNFPTMNGEEPVALESSPTMDFSYLAEEDFLQKFEEKKSLIEESEKHRKCTINGSIDDMMKIFETMEGQDISQYYFNF.

The disordered stretch occupies residues 20-40; it reads DASLSTKSPKREPSQEKEIKK. The span at 28–40 shows a compositional bias: basic and acidic residues; that stretch reads PKREPSQEKEIKK. C3H1-type zinc fingers lie at residues 44 to 68 and 81 to 106; these read IKKN…HPGE and RRKT…HDES. Residues 128–151 form a disordered region; it reads PGECKFSHPPPPPPSPPSPPPKEE. Pro residues predominate over residues 135-147; it reads HPPPPPPSPPSPP.

The sequence is that of Putative zinc finger protein 132L from Acheta domesticus (House cricket).